We begin with the raw amino-acid sequence, 443 residues long: Putative transporter AmpG 1 (443 aa).

12 consecutive transmembrane segments (helical) span residues 6–26 (HVCI…MITG), 43–63 (IGIL…APVF), 74–96 (ILGH…TSIL), 106–128 (VLLS…ILSA), 144–164 (GIYI…AIYL), 172–192 (KIYQ…ILVS), 255–275 (DISL…YRLP), 300–320 (VCKF…GIIM), 326–346 (LYSI…FILL), 355–375 (ILFI…TAYI), 394–414 (LSSM…YMVV), and 416–436 (FGWQ…LLIL).

The protein belongs to the major facilitator superfamily.

The protein resides in the cell inner membrane. This is Putative transporter AmpG 1 (ampG1) from Rickettsia typhi (strain ATCC VR-144 / Wilmington).